Consider the following 458-residue polypeptide: Argininosuccinate lyase (458 aa).

It belongs to the lyase 1 family. Argininosuccinate lyase subfamily.

It is found in the cytoplasm. The catalysed reaction is 2-(N(omega)-L-arginino)succinate = fumarate + L-arginine. Its pathway is amino-acid biosynthesis; L-arginine biosynthesis; L-arginine from L-ornithine and carbamoyl phosphate: step 3/3. In Neisseria meningitidis serogroup C (strain 053442), this protein is Argininosuccinate lyase.